Here is a 175-residue protein sequence, read N- to C-terminus: ATP synthase subunit delta (175 aa).

It belongs to the ATPase delta chain family. In terms of assembly, F-type ATPases have 2 components, F(1) - the catalytic core - and F(0) - the membrane proton channel. F(1) has five subunits: alpha(3), beta(3), gamma(1), delta(1), epsilon(1). F(0) has three main subunits: a(1), b(2) and c(10-14). The alpha and beta chains form an alternating ring which encloses part of the gamma chain. F(1) is attached to F(0) by a central stalk formed by the gamma and epsilon chains, while a peripheral stalk is formed by the delta and b chains.

It is found in the cell inner membrane. F(1)F(0) ATP synthase produces ATP from ADP in the presence of a proton or sodium gradient. F-type ATPases consist of two structural domains, F(1) containing the extramembraneous catalytic core and F(0) containing the membrane proton channel, linked together by a central stalk and a peripheral stalk. During catalysis, ATP synthesis in the catalytic domain of F(1) is coupled via a rotary mechanism of the central stalk subunits to proton translocation. Its function is as follows. This protein is part of the stalk that links CF(0) to CF(1). It either transmits conformational changes from CF(0) to CF(1) or is implicated in proton conduction. In Xanthomonas oryzae pv. oryzae (strain PXO99A), this protein is ATP synthase subunit delta.